Here is a 211-residue protein sequence, read N- to C-terminus: Thymidylate kinase (211 aa).

10–17 serves as a coordination point for ATP; that stretch reads GPDGAGKT.

Belongs to the thymidylate kinase family.

The enzyme catalyses dTMP + ATP = dTDP + ADP. In terms of biological role, phosphorylation of dTMP to form dTDP in both de novo and salvage pathways of dTTP synthesis. This is Thymidylate kinase from Lactococcus lactis subsp. cremoris (strain SK11).